The sequence spans 338 residues: MGAPHEEIQALKRRREQNRLAQRRRRDNVRRRLRDLGLDTGSPASASQTSLCSSTDSRVTLNPHQSLRSTDFLSFETSNSDTEMSPYDPPLQSKLRLDSQIPLAEISFPSYASSVSPSSSAGPLSSSPSPSQRPFIDSTDLTSLQSVYNPTSLAVHLDESSMPCGEAEIPTRQDSNFPRTPNLKSLMSGCNDPSAYQPWILTSSTVGEQMSSQALPHSPGPQHCSTPLPAETRPRWTTALHMAVSQGNFSVMRLLLSYGADPNAVNSEGATALHVGVMNGNYTMVAELLQRGADPTLTNAAGWLPLHQAVHAGDEGCVRVLLEADQPVDYPISDLDYT.

Residues 1 to 10 (MGAPHEEIQA) are compositionally biased toward basic and acidic residues. Disordered regions lie at residues 1-70 (MGAP…LRST) and 112-137 (ASSV…PFID). Residues 11–33 (LKRRREQNRLAQRRRRDNVRRRL) show a composition bias toward basic residues. The span at 42-70 (SPASASQTSLCSSTDSRVTLNPHQSLRST) shows a compositional bias: polar residues. A compositionally biased stretch (low complexity) spans 112 to 130 (ASSVSPSSSAGPLSSSPSP). 3 ANK repeats span residues 235–264 (RWTT…DPNA), 268–297 (EGAT…DPTL), and 301–330 (AGWL…PVDY).

Its pathway is secondary metabolite biosynthesis. Its function is as follows. Transcription coregulator involved in regulation of gene cluster that mediates the biosynthesis of aspergillic acid, a hydroxamic acid-containing pyrazinone with aliphatic side chains that originates from leucine (Leu) and isoleucine (Ile). Aspergillic acid has antibiotic properties and was shown to be lethal to mice. The polypeptide is Ankyrin-repeat domain containing transcription coregulator asaA (Aspergillus flavus (strain ATCC 200026 / FGSC A1120 / IAM 13836 / NRRL 3357 / JCM 12722 / SRRC 167)).